Consider the following 124-residue polypeptide: Small ribosomal subunit protein uS12 (124 aa).

Residues 8–28 (IRSAREKTDKKTKSPALKSCP) are disordered. Residues 10–19 (SAREKTDKKT) are compositionally biased toward basic and acidic residues. Asp-89 is subject to 3-methylthioaspartic acid.

Belongs to the universal ribosomal protein uS12 family. As to quaternary structure, part of the 30S ribosomal subunit. Contacts proteins S8 and S17. May interact with IF1 in the 30S initiation complex.

In terms of biological role, with S4 and S5 plays an important role in translational accuracy. Interacts with and stabilizes bases of the 16S rRNA that are involved in tRNA selection in the A site and with the mRNA backbone. Located at the interface of the 30S and 50S subunits, it traverses the body of the 30S subunit contacting proteins on the other side and probably holding the rRNA structure together. The combined cluster of proteins S8, S12 and S17 appears to hold together the shoulder and platform of the 30S subunit. The polypeptide is Small ribosomal subunit protein uS12 (Arthrospira platensis (Spirulina platensis)).